The following is a 98-amino-acid chain: Putative pterin-4-alpha-carbinolamine dehydratase (98 aa).

The protein belongs to the pterin-4-alpha-carbinolamine dehydratase family.

The enzyme catalyses (4aS,6R)-4a-hydroxy-L-erythro-5,6,7,8-tetrahydrobiopterin = (6R)-L-erythro-6,7-dihydrobiopterin + H2O. In Mesorhizobium japonicum (strain LMG 29417 / CECT 9101 / MAFF 303099) (Mesorhizobium loti (strain MAFF 303099)), this protein is Putative pterin-4-alpha-carbinolamine dehydratase.